Reading from the N-terminus, the 264-residue chain is Ribosomal protein L11 methyltransferase (264 aa).

The S-adenosyl-L-methionine site is built by Thr-116, Gly-137, Asp-159, and Asn-200.

Belongs to the methyltransferase superfamily. PrmA family.

Its subcellular location is the cytoplasm. It carries out the reaction L-lysyl-[protein] + 3 S-adenosyl-L-methionine = N(6),N(6),N(6)-trimethyl-L-lysyl-[protein] + 3 S-adenosyl-L-homocysteine + 3 H(+). Methylates ribosomal protein L11. This Thermotoga maritima (strain ATCC 43589 / DSM 3109 / JCM 10099 / NBRC 100826 / MSB8) protein is Ribosomal protein L11 methyltransferase.